The sequence spans 225 residues: NAD(P)H-quinone oxidoreductase subunit K, chloroplastic (225 aa).

[4Fe-4S] cluster contacts are provided by Cys-43, Cys-44, Cys-108, and Cys-139.

The protein belongs to the complex I 20 kDa subunit family. As to quaternary structure, NDH is composed of at least 16 different subunits, 5 of which are encoded in the nucleus. Requires [4Fe-4S] cluster as cofactor.

Its subcellular location is the plastid. It localises to the chloroplast thylakoid membrane. It catalyses the reaction a plastoquinone + NADH + (n+1) H(+)(in) = a plastoquinol + NAD(+) + n H(+)(out). The catalysed reaction is a plastoquinone + NADPH + (n+1) H(+)(in) = a plastoquinol + NADP(+) + n H(+)(out). Its function is as follows. NDH shuttles electrons from NAD(P)H:plastoquinone, via FMN and iron-sulfur (Fe-S) centers, to quinones in the photosynthetic chain and possibly in a chloroplast respiratory chain. The immediate electron acceptor for the enzyme in this species is believed to be plastoquinone. Couples the redox reaction to proton translocation, and thus conserves the redox energy in a proton gradient. This Lobularia maritima (Sweet alyssum) protein is NAD(P)H-quinone oxidoreductase subunit K, chloroplastic.